The primary structure comprises 372 residues: Peptide chain release factor 2 (372 aa).

N5-methylglutamine is present on Gln-253.

This sequence belongs to the prokaryotic/mitochondrial release factor family. Post-translationally, methylated by PrmC. Methylation increases the termination efficiency of RF2.

Its subcellular location is the cytoplasm. Peptide chain release factor 2 directs the termination of translation in response to the peptide chain termination codons UGA and UAA. This chain is Peptide chain release factor 2, found in Nocardia farcinica (strain IFM 10152).